The sequence spans 209 residues: MAEVQPTRMELIKLRRRIKMATRGHALLKMKRDGLIMEFRQLLEEAKEVIGGMVQKYEKAQSKLALAIAVDGIVAVRSIALSCCQIPPEFSMKRKNIMGVVVPVIKREPIRKKPTERGYGILSTSTRVDEAVEAYEELVDAVLEVAEIETTLRKLIEEIERTKRRVNALEYRVIPTMEELAKFISFKLEEMDRENIIRLKKLKMKKAKS.

This sequence belongs to the V-ATPase D subunit family. As to quaternary structure, has multiple subunits with at least A(3), B(3), C, D, E, F, H, I and proteolipid K(x).

It localises to the cell membrane. In terms of biological role, component of the A-type ATP synthase that produces ATP from ADP in the presence of a proton gradient across the membrane. This Archaeoglobus fulgidus (strain ATCC 49558 / DSM 4304 / JCM 9628 / NBRC 100126 / VC-16) protein is A-type ATP synthase subunit D.